Here is a 248-residue protein sequence, read N- to C-terminus: Ubiquinone biosynthesis O-methyltransferase (248 aa).

S-adenosyl-L-methionine-binding residues include Arg-41, Gly-72, Asp-93, and Met-136.

Belongs to the methyltransferase superfamily. UbiG/COQ3 family.

The catalysed reaction is a 3-demethylubiquinol + S-adenosyl-L-methionine = a ubiquinol + S-adenosyl-L-homocysteine + H(+). It catalyses the reaction a 3-(all-trans-polyprenyl)benzene-1,2-diol + S-adenosyl-L-methionine = a 2-methoxy-6-(all-trans-polyprenyl)phenol + S-adenosyl-L-homocysteine + H(+). It participates in cofactor biosynthesis; ubiquinone biosynthesis. Functionally, O-methyltransferase that catalyzes the 2 O-methylation steps in the ubiquinone biosynthetic pathway. In Sinorhizobium medicae (strain WSM419) (Ensifer medicae), this protein is Ubiquinone biosynthesis O-methyltransferase.